We begin with the raw amino-acid sequence, 179 residues long: Large ribosomal subunit protein uL5 (179 aa).

The protein belongs to the universal ribosomal protein uL5 family. In terms of assembly, part of the 50S ribosomal subunit; part of the 5S rRNA/L5/L18/L25 subcomplex. Contacts the 5S rRNA and the P site tRNA. Forms a bridge to the 30S subunit in the 70S ribosome.

This is one of the proteins that bind and probably mediate the attachment of the 5S RNA into the large ribosomal subunit, where it forms part of the central protuberance. In the 70S ribosome it contacts protein S13 of the 30S subunit (bridge B1b), connecting the 2 subunits; this bridge is implicated in subunit movement. Contacts the P site tRNA; the 5S rRNA and some of its associated proteins might help stabilize positioning of ribosome-bound tRNAs. The sequence is that of Large ribosomal subunit protein uL5 from Burkholderia mallei (strain NCTC 10247).